The following is a 168-amino-acid chain: 2-C-methyl-D-erythritol 2,4-cyclodiphosphate synthase (168 aa).

A divalent metal cation contacts are provided by Asp15 and His17. Residues Asp15–His17 and His45–Ser46 each bind 4-CDP-2-C-methyl-D-erythritol 2-phosphate. His53 provides a ligand contact to a divalent metal cation. 4-CDP-2-C-methyl-D-erythritol 2-phosphate is bound by residues Phe72–Asp76, Phe150, and Arg153.

The protein belongs to the IspF family. Homotrimer. A divalent metal cation serves as cofactor.

The enzyme catalyses 4-CDP-2-C-methyl-D-erythritol 2-phosphate = 2-C-methyl-D-erythritol 2,4-cyclic diphosphate + CMP. The protein operates within isoprenoid biosynthesis; isopentenyl diphosphate biosynthesis via DXP pathway; isopentenyl diphosphate from 1-deoxy-D-xylulose 5-phosphate: step 4/6. In terms of biological role, involved in the biosynthesis of isopentenyl diphosphate (IPP) and dimethylallyl diphosphate (DMAPP), two major building blocks of isoprenoid compounds. Catalyzes the conversion of 4-diphosphocytidyl-2-C-methyl-D-erythritol 2-phosphate (CDP-ME2P) to 2-C-methyl-D-erythritol 2,4-cyclodiphosphate (ME-CPP) with a corresponding release of cytidine 5-monophosphate (CMP). The polypeptide is 2-C-methyl-D-erythritol 2,4-cyclodiphosphate synthase (Anaplasma phagocytophilum (strain HZ)).